A 2488-amino-acid chain; its full sequence is PKS-NRPS hybrid synthetase swnK (2488 aa).

Residues 33–422 form an adenylation (A) domain region; sequence FEQVADRFPD…GRIDGVVKIR (390 aa). Residues 523–598 enclose the Carrier 1 domain; the sequence is QPTSELEQRI…ALAAYLAGTG (76 aa). O-(pantetheine 4'-phosphoryl)serine is present on S558. A Ketosynthase family 3 (KS3) domain is found at 616 to 1039; the sequence is HEDIAIVSMA…GTNAHVIVEE (424 aa). Catalysis depends on for beta-ketoacyl synthase activity residues C785, H920, and H960. The interval 1149–1471 is malonyl-CoA:ACP transacylase (MAT) domain; sequence LFTGQGSQLP…SLSELHVRHV (323 aa). The tract at residues 1723 to 1901 is ketoreductase (KR) domain; sequence GAVLVTGGLG…ASSVAYGTWA (179 aa). The region spanning 2002 to 2077 is the Carrier 2 domain; the sequence is SIVLHMVQAT…SLSEFLLCRL (76 aa). The residue at position 2037 (S2037) is an O-(pantetheine 4'-phosphoryl)serine. Residues 2084–2103 are disordered; it reads STSSPSDTDGATPSTPTSAA. Residues 2136–2364 are thioester reductase (TE) domain; sequence VTGATGFVGT…VLPVDYLCGT (229 aa).

This sequence in the N-terminal section; belongs to the NRP synthetase family.

The catalysed reaction is L-pipecolate + malonyl-CoA + 2 NADPH + 4 H(+) = (8aS)-octahydroindolizin-1-one + CO2 + 2 NADP(+) + CoA + 2 H2O. It catalyses the reaction L-pipecolate + malonyl-CoA + 3 NADPH + 5 H(+) = (1R,8aS)-octahydroindolizin-1-ol + CO2 + 3 NADP(+) + CoA + 2 H2O. The enzyme catalyses L-pipecolate + malonyl-CoA + 3 NADPH + 5 H(+) = (1S,8aS)-octahydroindolizin-1-ol + CO2 + 3 NADP(+) + CoA + 2 H2O. Its pathway is mycotoxin biosynthesis. Functionally, PKS-NRPS hybrid synthetase; part of the gene cluster that mediates the biosynthesis of swainsonine (SW), a cytotoxic fungal alkaloid and a potential cancer therapy drug. Swainsonine production occurs via a multibranched pathway and is dispensable for fungal colonization of plants and infection of insect hosts. The first step of swainsonine biosynthesis is the production of the precursor pipecolic acid (PA) via conversion of L-lysine (Lys) to 1-piperideine-6-carboxylate (P6C) by the aminotransferase swnA, the latter being further reduced to PA by the reductase swnR. PA can be converted from lysine by both the SW biosynthetic cluster and the unclustered genes such as lysine cyclodeaminase. The PKS-NRPS hybrid synthetase swnK uptakes and condensates PA and malonyl-CoA with and without skipping of the ketoreductase (KR) domain in order to produce 3 intermediates, 1-oxoindolizidine, (1S)-1-hydroxyindolizin, and (1R)-1-hydroxyindolizine; with the transisomer (1S)-1-hydroxyindolizin being predominant. The terminal thioester reductase (TE) domain of swnK is involved in reduction of the thioester bond to release the intermediate aldehydes. The oxidoreductase swnN could contribute to the reduction of 1-oxoindolizidine to (1S)-1-hydroxyindolizin and (1R)-1-hydroxyindolizine, contributing to the major route of SW production. The dioxygenase swnH2 would be responsible for the oxidization of (1R)-1-hydroxyindolizine into (1R,2S)-1,2-dihydroxyindolizine and of (1S)-1-hydroxyindolizin to yield both (1R,2S)-1,2-dihydroxyindolizine and (1S,2S)-1,2-dihydroxyindolizine. The dioxygenase swnH1 then performs the conversion of the 1,2-dihydroxyindolizine epimers to SW. The sequence is that of PKS-NRPS hybrid synthetase swnK from Metarhizium robertsii (strain ARSEF 23 / ATCC MYA-3075) (Metarhizium anisopliae (strain ARSEF 23)).